Here is a 429-residue protein sequence, read N- to C-terminus: Aspartate--tRNA(Asp/Asn) ligase (429 aa).

E167 provides a ligand contact to L-aspartate. Positions 189-192 (QLYK) are aspartate. R210 is an L-aspartate binding site. ATP is bound by residues 210-212 (RAE) and E352. Residues E352 and S355 each coordinate Mg(2+). S355 and R359 together coordinate L-aspartate. Residue 400–403 (GLAR) coordinates ATP.

Belongs to the class-II aminoacyl-tRNA synthetase family. Type 2 subfamily. As to quaternary structure, homodimer. Mg(2+) serves as cofactor.

Its subcellular location is the cytoplasm. The catalysed reaction is tRNA(Asx) + L-aspartate + ATP = L-aspartyl-tRNA(Asx) + AMP + diphosphate. Functionally, aspartyl-tRNA synthetase with relaxed tRNA specificity since it is able to aspartylate not only its cognate tRNA(Asp) but also tRNA(Asn). Reaction proceeds in two steps: L-aspartate is first activated by ATP to form Asp-AMP and then transferred to the acceptor end of tRNA(Asp/Asn). The polypeptide is Aspartate--tRNA(Asp/Asn) ligase (Sulfurisphaera tokodaii (strain DSM 16993 / JCM 10545 / NBRC 100140 / 7) (Sulfolobus tokodaii)).